Reading from the N-terminus, the 290-residue chain is Signal peptidase I (290 aa).

The Cytoplasmic segment spans residues 1-13 (MKFLRSVYAFCSS). Residues 14 to 34 (WVGTIIIVLLVIFFIAQAFII) form a helical membrane-spanning segment. Over 35–290 (PSRSMVGTLY…KIIKKEKATH (256 aa)) the chain is Extracellular. Residues serine 38 and lysine 106 contribute to the active site.

Belongs to the peptidase S26 family.

Its subcellular location is the cell membrane. It catalyses the reaction Cleavage of hydrophobic, N-terminal signal or leader sequences from secreted and periplasmic proteins.. This is Signal peptidase I (lepB) from Helicobacter pylori (strain J99 / ATCC 700824) (Campylobacter pylori J99).